Consider the following 618-residue polypeptide: UvrABC system protein C (618 aa).

One can recognise a GIY-YIG domain in the interval 13 to 92 (DKPGVYLMKN…IKKYRPKYNI (80 aa)). Residues 204–239 (LDIVENFKLNMEKAAENLEFEKAAMLRDKINIIEKI) enclose the UVR domain.

This sequence belongs to the UvrC family. In terms of assembly, interacts with UvrB in an incision complex.

Its subcellular location is the cytoplasm. The UvrABC repair system catalyzes the recognition and processing of DNA lesions. UvrC both incises the 5' and 3' sides of the lesion. The N-terminal half is responsible for the 3' incision and the C-terminal half is responsible for the 5' incision. The chain is UvrABC system protein C from Clostridium botulinum (strain Kyoto / Type A2).